A 74-amino-acid polypeptide reads, in one-letter code: uncharacterized protein (74 aa).

A disordered region spans residues Asp-55–Gly-74.

This is an uncharacterized protein from Listeria innocua serovar 6a (strain ATCC BAA-680 / CLIP 11262).